A 73-amino-acid polypeptide reads, in one-letter code: Cell division protein ZapB (73 aa).

Residues 3–66 are a coiled coil; the sequence is LELLSKLETK…SWNEKVTGLV (64 aa).

It belongs to the ZapB family. In terms of assembly, homodimer. The ends of the coiled-coil dimer bind to each other, forming polymers. Interacts with FtsZ.

The protein resides in the cytoplasm. In terms of biological role, non-essential, abundant cell division factor that is required for proper Z-ring formation. It is recruited early to the divisome by direct interaction with FtsZ, stimulating Z-ring assembly and thereby promoting cell division earlier in the cell cycle. Its recruitment to the Z-ring requires functional FtsA or ZipA. In Shewanella baltica (strain OS223), this protein is Cell division protein ZapB.